Consider the following 107-residue polypeptide: Small ribosomal subunit protein bS18c (107 aa).

Residues 85–95 (KKAQRFKRRQS) show a composition bias toward basic residues. The tract at residues 85-107 (KKAQRFKRRQSTARTVGLRTRNK) is disordered.

It belongs to the bacterial ribosomal protein bS18 family. In terms of assembly, part of the 30S ribosomal subunit.

The protein localises to the plastid. It localises to the chloroplast. This chain is Small ribosomal subunit protein bS18c, found in Oenothera argillicola (Appalachian evening primrose).